A 462-amino-acid polypeptide reads, in one-letter code: Argininosuccinate lyase 2 (462 aa).

The protein belongs to the lyase 1 family. Argininosuccinate lyase subfamily.

It is found in the cytoplasm. The enzyme catalyses 2-(N(omega)-L-arginino)succinate = fumarate + L-arginine. It participates in amino-acid biosynthesis; L-arginine biosynthesis; L-arginine from L-ornithine and carbamoyl phosphate: step 3/3. The protein is Argininosuccinate lyase 2 of Shouchella clausii (strain KSM-K16) (Alkalihalobacillus clausii).